We begin with the raw amino-acid sequence, 167 residues long: Osteocalcin 2a (167 aa).

An N-terminal signal peptide occupies residues 1-18 (MKSLTLLTICAVLSVSLS). Residues 19 to 118 (MNDLALDVVL…LASVLLRRKR (100 aa)) constitute a propeptide that is removed on maturation. Residues 28-99 (LDPAPDPATE…TTEDPAAATE (72 aa)) are disordered. Residues 38–87 (PAPAADSSASSSASSSSSSASDSSASASDSSDSDSSSASSSSSSSESASA) show a composition bias toward low complexity. The Gla domain occupies 131 to 163 (QVESLSEVCELNLACEHMAETAGIVAAYTAYYG). Ca(2+)-binding residues include E133, E137, and E140. A 4-carboxyglutamate mark is found at E133, E137, and E140. The cysteines at positions 139 and 145 are disulfide-linked.

It belongs to the osteocalcin/matrix Gla protein family. Post-translationally, gamma-carboxyglutamate residues are formed by vitamin K dependent carboxylation. These residues are essential for the binding of calcium.

The protein resides in the secreted. Functionally, binds strongly to apatite and calcium. The protein is Osteocalcin 2a of Oncorhynchus mykiss (Rainbow trout).